The sequence spans 256 residues: Hydroxyacylglutathione hydrolase (256 aa).

7 residues coordinate Zn(2+): H54, H56, D58, H59, H113, D136, and H174.

This sequence belongs to the metallo-beta-lactamase superfamily. Glyoxalase II family. In terms of assembly, monomer. It depends on Zn(2+) as a cofactor.

It catalyses the reaction an S-(2-hydroxyacyl)glutathione + H2O = a 2-hydroxy carboxylate + glutathione + H(+). The protein operates within secondary metabolite metabolism; methylglyoxal degradation; (R)-lactate from methylglyoxal: step 2/2. Its function is as follows. Thiolesterase that catalyzes the hydrolysis of S-D-lactoyl-glutathione to form glutathione and D-lactic acid. The sequence is that of Hydroxyacylglutathione hydrolase from Cyanothece sp. (strain PCC 7425 / ATCC 29141).